A 472-amino-acid chain; its full sequence is L-fuculokinase (472 aa).

The protein belongs to the FGGY kinase family. A divalent metal cation is required as a cofactor.

It carries out the reaction L-fuculose + ATP = L-fuculose 1-phosphate + ADP + H(+). It participates in carbohydrate degradation; L-fucose degradation; L-lactaldehyde and glycerone phosphate from L-fucose: step 2/3. Functionally, catalyzes the phosphorylation of L-fuculose. The polypeptide is L-fuculokinase (Salmonella typhi).